Consider the following 239-residue polypeptide: Phosphoribosylaminoimidazole-succinocarboxamide synthase (239 aa).

The protein belongs to the SAICAR synthetase family.

It catalyses the reaction 5-amino-1-(5-phospho-D-ribosyl)imidazole-4-carboxylate + L-aspartate + ATP = (2S)-2-[5-amino-1-(5-phospho-beta-D-ribosyl)imidazole-4-carboxamido]succinate + ADP + phosphate + 2 H(+). It functions in the pathway purine metabolism; IMP biosynthesis via de novo pathway; 5-amino-1-(5-phospho-D-ribosyl)imidazole-4-carboxamide from 5-amino-1-(5-phospho-D-ribosyl)imidazole-4-carboxylate: step 1/2. This chain is Phosphoribosylaminoimidazole-succinocarboxamide synthase, found in Campylobacter hominis (strain ATCC BAA-381 / DSM 21671 / CCUG 45161 / LMG 19568 / NCTC 13146 / CH001A).